The chain runs to 364 residues: Chaperone protein DnaJ (364 aa).

The 66-residue stretch at D4–G69 folds into the J domain. Residues G135 to Q213 form a CR-type zinc finger. Zn(2+) is bound by residues C148, C151, C165, C168, C187, C190, C201, and C204. CXXCXGXG motif repeat units follow at residues C148–K155, C165–G172, C187–G194, and C201–G208.

The protein belongs to the DnaJ family. In terms of assembly, homodimer. The cofactor is Zn(2+).

The protein resides in the cytoplasm. Functionally, participates actively in the response to hyperosmotic and heat shock by preventing the aggregation of stress-denatured proteins and by disaggregating proteins, also in an autonomous, DnaK-independent fashion. Unfolded proteins bind initially to DnaJ; upon interaction with the DnaJ-bound protein, DnaK hydrolyzes its bound ATP, resulting in the formation of a stable complex. GrpE releases ADP from DnaK; ATP binding to DnaK triggers the release of the substrate protein, thus completing the reaction cycle. Several rounds of ATP-dependent interactions between DnaJ, DnaK and GrpE are required for fully efficient folding. Also involved, together with DnaK and GrpE, in the DNA replication of plasmids through activation of initiation proteins. The chain is Chaperone protein DnaJ from Borreliella burgdorferi (strain ATCC 35210 / DSM 4680 / CIP 102532 / B31) (Borrelia burgdorferi).